We begin with the raw amino-acid sequence, 294 residues long: Flavin-dependent thymidylate synthase (294 aa).

The region spanning 27-250 (GFIRVIDYMG…PFTYEAFEEY (224 aa)) is the ThyX domain. FAD-binding positions include T73, 96-98 (RHR), and E104. Residues 93-96 (QWIR), 104-108 (EYSAR), and R189 contribute to the dUMP site. The short motif at 96–106 (RHRTASVNEYS) is the ThyX motif element. FAD is bound by residues 205–207 (NLH) and H211. Position 216 (R216) interacts with dUMP. The active-site Involved in ionization of N3 of dUMP, leading to its activation is R216.

The protein belongs to the thymidylate synthase ThyX family. As to quaternary structure, homotetramer. Requires FAD as cofactor.

The catalysed reaction is dUMP + (6R)-5,10-methylene-5,6,7,8-tetrahydrofolate + NADPH + H(+) = dTMP + (6S)-5,6,7,8-tetrahydrofolate + NADP(+). The protein operates within pyrimidine metabolism; dTTP biosynthesis. Functionally, catalyzes the reductive methylation of 2'-deoxyuridine-5'-monophosphate (dUMP) to 2'-deoxythymidine-5'-monophosphate (dTMP) while utilizing 5,10-methylenetetrahydrofolate (mTHF) as the methyl donor, and NADPH and FADH(2) as the reductant. The chain is Flavin-dependent thymidylate synthase from Rickettsia bellii (strain RML369-C).